A 436-amino-acid chain; its full sequence is Trigger factor (436 aa).

Positions 161–246 (EDQLNIDFVG…VNTVSEPKLP (86 aa)) constitute a PPIase FKBP-type domain.

Belongs to the FKBP-type PPIase family. Tig subfamily.

It localises to the cytoplasm. It carries out the reaction [protein]-peptidylproline (omega=180) = [protein]-peptidylproline (omega=0). In terms of biological role, involved in protein export. Acts as a chaperone by maintaining the newly synthesized protein in an open conformation. Functions as a peptidyl-prolyl cis-trans isomerase. This is Trigger factor from Pseudomonas syringae pv. syringae (strain B728a).